We begin with the raw amino-acid sequence, 61 residues long: Small ribosomal subunit protein uS14 (61 aa).

Residues Cys-24, Cys-27, Cys-40, and Cys-43 each contribute to the Zn(2+) site.

This sequence belongs to the universal ribosomal protein uS14 family. Zinc-binding uS14 subfamily. Part of the 30S ribosomal subunit. Contacts proteins S3 and S10. The cofactor is Zn(2+).

Functionally, binds 16S rRNA, required for the assembly of 30S particles and may also be responsible for determining the conformation of the 16S rRNA at the A site. The polypeptide is Small ribosomal subunit protein uS14 (Macrococcus caseolyticus (strain JCSC5402) (Macrococcoides caseolyticum)).